The sequence spans 674 residues: DNA ligase (674 aa).

NAD(+) contacts are provided by residues 35 to 39, 84 to 85, and glutamate 118; these read DFEFD and SL. Lysine 120 acts as the N6-AMP-lysine intermediate in catalysis. 4 residues coordinate NAD(+): arginine 141, glutamate 184, lysine 297, and lysine 321. The Zn(2+) site is built by cysteine 415, cysteine 418, cysteine 433, and cysteine 439. The region spanning 598-674 is the BRCT domain; it reads QVNRNFEGVT…VSEDEFEAML (77 aa).

This sequence belongs to the NAD-dependent DNA ligase family. LigA subfamily. It depends on Mg(2+) as a cofactor. Mn(2+) is required as a cofactor.

It catalyses the reaction NAD(+) + (deoxyribonucleotide)n-3'-hydroxyl + 5'-phospho-(deoxyribonucleotide)m = (deoxyribonucleotide)n+m + AMP + beta-nicotinamide D-nucleotide.. DNA ligase that catalyzes the formation of phosphodiester linkages between 5'-phosphoryl and 3'-hydroxyl groups in double-stranded DNA using NAD as a coenzyme and as the energy source for the reaction. It is essential for DNA replication and repair of damaged DNA. This is DNA ligase from Pelodictyon phaeoclathratiforme (strain DSM 5477 / BU-1).